Here is a 402-residue protein sequence, read N- to C-terminus: uncharacterized protein (402 aa).

Transmembrane regions (helical) follow at residues 23–43, 52–72, 90–110, 121–141, 158–178, 180–200, 228–248, 255–275, 282–302, 309–329, 351–371, and 375–395; these read IVSV…PLAV, LGYG…ATLL, VLYG…SVAI, LLVG…AAIG, WNGI…VLLV, WLGL…GFAL, GMGL…ITLY, ANAV…RLLF, LGGF…LLLL, WVGL…FPAF, LFVD…ANLF, and SMFL…VALH.

This sequence belongs to the major facilitator superfamily. YhhS family.

The protein localises to the cell inner membrane. This is an uncharacterized protein from Pseudomonas aeruginosa (strain ATCC 15692 / DSM 22644 / CIP 104116 / JCM 14847 / LMG 12228 / 1C / PRS 101 / PAO1).